A 203-amino-acid chain; its full sequence is Short chain dehydrogenase/reductase dpmpH (203 aa).

Positions 23, 77, and 81 each coordinate NADP(+). Tyr77 acts as the Proton acceptor in catalysis. The active-site Lowers pKa of active site Tyr is the Lys81.

It belongs to the short-chain dehydrogenases/reductases (SDR) family.

It participates in secondary metabolite biosynthesis; terpenoid biosynthesis. Its function is as follows. Short chain dehydrogenase/reductase; part of the gene cluster that mediates the biosynthesis of diterpenoid pyrones. The first step of the pathway is the synthesis of the alpha-pyrone moiety by the polyketide synthase dpmpA via condensation of one acetyl-CoA starter unit with 3 malonyl-CoA units and 2 methylations. The alpha-pyrone is then combined with geranylgeranyl pyrophosphate (GGPP) formed by the GGPP synthase dpmpD through the action of the prenyltransferase dpmpC to yield a linear alpha-pyrone diterpenoid. Subsequent steps in the diterpenoid pyrone biosynthetic pathway involve the decalin core formation, which is initiated by the epoxidation of the C10-C11 olefin by the FAD-dependent oxidoreductase dpmpE, and is followed by a cyclization cascade catalyzed by the terpene cyclase dpmpB. The short chain dehydrogenase/reductase dpmpG then oxidizes the 8S hydroxy group to a ketone and the short chain dehydrogenase/reductase dpmpH reduces the ketone to the 8R hydroxy group to yield higginsianin B. Higginsianin B is further methylated by the methyltransferase dpmpI to produce the intermediate named FDDP B. The cytochrome P450 monooxygenase dpmpJ then oxidizes the C-26 methyl to primary alcohol, producing the final diterpenoid pyrone with a C-26 primary alcohol on the gamma-pyrone moiety named FDDP C. In Macrophomina phaseolina (strain MS6) (Charcoal rot fungus), this protein is Short chain dehydrogenase/reductase dpmpH.